A 192-amino-acid chain; its full sequence is Phosphoheptose isomerase (192 aa).

The region spanning 34-192 (VVDAYKAGNK…VERELFVKGK (159 aa)) is the SIS domain. Residue 49–51 (NGG) participates in substrate binding. 2 residues coordinate Zn(2+): histidine 58 and glutamate 62. Residues glutamate 62, 91 to 92 (ND), 117 to 119 (STS), serine 122, and glutamine 169 each bind substrate. Zn(2+) is bound by residues glutamine 169 and histidine 177.

This sequence belongs to the SIS family. GmhA subfamily. In terms of assembly, homotetramer. The cofactor is Zn(2+).

Its subcellular location is the cytoplasm. The enzyme catalyses 2 D-sedoheptulose 7-phosphate = D-glycero-alpha-D-manno-heptose 7-phosphate + D-glycero-beta-D-manno-heptose 7-phosphate. The protein operates within carbohydrate biosynthesis; D-glycero-D-manno-heptose 7-phosphate biosynthesis; D-glycero-alpha-D-manno-heptose 7-phosphate and D-glycero-beta-D-manno-heptose 7-phosphate from sedoheptulose 7-phosphate: step 1/1. Catalyzes the isomerization of sedoheptulose 7-phosphate in D-glycero-D-manno-heptose 7-phosphate. The polypeptide is Phosphoheptose isomerase (Citrifermentans bemidjiense (strain ATCC BAA-1014 / DSM 16622 / JCM 12645 / Bem) (Geobacter bemidjiensis)).